The following is a 488-amino-acid chain: GTPase Der (488 aa).

EngA-type G domains follow at residues Pro3 to Met166 and Ile199 to Thr372. Residues Gly9 to Ser16, Asp56 to Ile60, Asn118 to Asp121, Gly205 to Ser212, Asp252 to Val256, and Asn317 to Asp320 each bind GTP. In terms of domain architecture, KH-like spans Arg373–Asp457. Positions Phe460–Lys488 are disordered. Residues Arg473–Lys488 are compositionally biased toward basic residues.

The protein belongs to the TRAFAC class TrmE-Era-EngA-EngB-Septin-like GTPase superfamily. EngA (Der) GTPase family. As to quaternary structure, associates with the 50S ribosomal subunit.

In terms of biological role, GTPase that plays an essential role in the late steps of ribosome biogenesis. This is GTPase Der from Shewanella baltica (strain OS223).